The chain runs to 392 residues: Formate-dependent phosphoribosylglycinamide formyltransferase (392 aa).

N(1)-(5-phospho-beta-D-ribosyl)glycinamide contacts are provided by residues 22 to 23 (EL) and Glu82. ATP is bound by residues Arg114, Lys155, 160 to 165 (SSGKGQ), 195 to 198 (EGVV), and Glu203. Residues 119-308 (RLAAEELGLP…EFALHVRAFL (190 aa)) form the ATP-grasp domain. Mg(2+) is bound by residues Glu267 and Glu279. Residues Asp286, Lys355, and 362 to 363 (RR) each bind N(1)-(5-phospho-beta-D-ribosyl)glycinamide.

It belongs to the PurK/PurT family. In terms of assembly, homodimer.

The enzyme catalyses N(1)-(5-phospho-beta-D-ribosyl)glycinamide + formate + ATP = N(2)-formyl-N(1)-(5-phospho-beta-D-ribosyl)glycinamide + ADP + phosphate + H(+). It participates in purine metabolism; IMP biosynthesis via de novo pathway; N(2)-formyl-N(1)-(5-phospho-D-ribosyl)glycinamide from N(1)-(5-phospho-D-ribosyl)glycinamide (formate route): step 1/1. Its function is as follows. Involved in the de novo purine biosynthesis. Catalyzes the transfer of formate to 5-phospho-ribosyl-glycinamide (GAR), producing 5-phospho-ribosyl-N-formylglycinamide (FGAR). Formate is provided by PurU via hydrolysis of 10-formyl-tetrahydrofolate. This Salmonella choleraesuis (strain SC-B67) protein is Formate-dependent phosphoribosylglycinamide formyltransferase.